The sequence spans 142 residues: Large ribosomal subunit protein uL13 (142 aa).

This sequence belongs to the universal ribosomal protein uL13 family. Part of the 50S ribosomal subunit.

Functionally, this protein is one of the early assembly proteins of the 50S ribosomal subunit, although it is not seen to bind rRNA by itself. It is important during the early stages of 50S assembly. The sequence is that of Large ribosomal subunit protein uL13 from Photorhabdus laumondii subsp. laumondii (strain DSM 15139 / CIP 105565 / TT01) (Photorhabdus luminescens subsp. laumondii).